A 347-amino-acid chain; its full sequence is Sulfate/thiosulfate import ATP-binding protein CysA 1 (347 aa).

The ABC transporter domain maps to 3–237 (VRVESLRKEF…PVSPFVYGFI (235 aa)). ATP is bound at residue 35–42 (GPSGSGKT).

Belongs to the ABC transporter superfamily. Sulfate/tungstate importer (TC 3.A.1.6) family. As to quaternary structure, the complex is composed of two ATP-binding proteins (CysA), two transmembrane proteins (CysT and CysW) and a solute-binding protein (CysP).

It is found in the cell inner membrane. It catalyses the reaction sulfate(out) + ATP + H2O = sulfate(in) + ADP + phosphate + H(+). It carries out the reaction thiosulfate(out) + ATP + H2O = thiosulfate(in) + ADP + phosphate + H(+). In terms of biological role, part of the ABC transporter complex CysAWTP involved in sulfate/thiosulfate import. Responsible for energy coupling to the transport system. This Rhizobium meliloti (strain 1021) (Ensifer meliloti) protein is Sulfate/thiosulfate import ATP-binding protein CysA 1.